We begin with the raw amino-acid sequence, 360 residues long: Nucleoporin SEH1-B (360 aa).

WD repeat units lie at residues 10 to 49, 55 to 96, 111 to 152, 160 to 210, 217 to 258, and 276 to 315; these read DHKD…NWHC, THSG…SNDK, DSRT…NLSQ, SCKL…RKYA, SVSD…KELS, and NHNS…NWKC.

Belongs to the WD repeat SEC13 family. Component of the Nup107-160 subcomplex of the nuclear pore complex (NPC). The Nup107-160 subcomplex includes NUP160, NUP133, NUP107, NUP98, NUP85, NUP43, NUP37, SEH1 and SEC13. Component of the GATOR2 subcomplex, composed of MIOS, SEC13, SEH1L, WDR24 and WDR59. The GATOR2 complex interacts with CASTOR1 and CASTOR2; the interaction is negatively regulated by arginine. The GATOR2 complex interacts with SESN1, SESN2 and SESN3; the interaction is negatively regulated by amino acids.

Its subcellular location is the chromosome. It localises to the centromere. The protein resides in the kinetochore. It is found in the nucleus. The protein localises to the nuclear pore complex. Its subcellular location is the lysosome membrane. Its activity is regulated as follows. The GATOR2 complex is negatively regulated by the upstream amino acid sensors CASTOR1 and SESN2, which sequester the GATOR2 complex in absence of amino acids. In the presence of abundant amino acids, GATOR2 is released from CASTOR1 and SESN2 and activated. Functionally, component of the Nup107-160 subcomplex of the nuclear pore complex (NPC). The Nup107-160 subcomplex is required for the assembly of a functional NPC. The Nup107-160 subcomplex is also required for normal kinetochore microtubule attachment, mitotic progression and chromosome segregation. This subunit plays a role in recruitment of the Nup107-160 subcomplex to the kinetochore. As a component of the GATOR2 complex, functions as an activator of the amino acid-sensing branch of the mTORC1 signaling pathway. The GATOR2 complex indirectly activates mTORC1 through the inhibition of the GATOR1 subcomplex. GATOR2 probably acts as an E3 ubiquitin-protein ligase toward GATOR1. In the presence of abundant amino acids, the GATOR2 complex mediates ubiquitination of the NPRL2 core component of the GATOR1 complex, leading to GATOR1 inactivation. In the absence of amino acids, GATOR2 is inhibited, activating the GATOR1 complex. This Xenopus laevis (African clawed frog) protein is Nucleoporin SEH1-B (seh1l-b).